The primary structure comprises 198 residues: NADH-quinone oxidoreductase subunit C (198 aa).

Belongs to the complex I 30 kDa subunit family. NDH-1 is composed of 14 different subunits. Subunits NuoB, C, D, E, F, and G constitute the peripheral sector of the complex.

The protein localises to the cell inner membrane. It carries out the reaction a quinone + NADH + 5 H(+)(in) = a quinol + NAD(+) + 4 H(+)(out). Functionally, NDH-1 shuttles electrons from NADH, via FMN and iron-sulfur (Fe-S) centers, to quinones in the respiratory chain. The immediate electron acceptor for the enzyme in this species is believed to be ubiquinone. Couples the redox reaction to proton translocation (for every two electrons transferred, four hydrogen ions are translocated across the cytoplasmic membrane), and thus conserves the redox energy in a proton gradient. In Herminiimonas arsenicoxydans, this protein is NADH-quinone oxidoreductase subunit C.